Reading from the N-terminus, the 224-residue chain is UPF0111 protein CT_691 (224 aa).

The protein belongs to the UPF0111 family.

The protein is UPF0111 protein CT_691 of Chlamydia trachomatis serovar D (strain ATCC VR-885 / DSM 19411 / UW-3/Cx).